The primary structure comprises 129 residues: Glycine cleavage system H protein (129 aa).

The Lipoyl-binding domain maps to 24-106; sequence IATIGITEFA…YGEGWFLKVR (83 aa). Lys65 bears the N6-lipoyllysine mark.

This sequence belongs to the GcvH family. As to quaternary structure, the glycine cleavage system is composed of four proteins: P, T, L and H. The cofactor is (R)-lipoate.

Its function is as follows. The glycine cleavage system catalyzes the degradation of glycine. The H protein shuttles the methylamine group of glycine from the P protein to the T protein. This Nostoc punctiforme (strain ATCC 29133 / PCC 73102) protein is Glycine cleavage system H protein.